The sequence spans 561 residues: Glutamate--tRNA ligase (561 aa).

The short motif at 107–117 is the 'HIGH' region element; sequence PNPSGPLHLGH.

Belongs to the class-I aminoacyl-tRNA synthetase family. Glutamate--tRNA ligase type 2 subfamily.

Its subcellular location is the cytoplasm. The catalysed reaction is tRNA(Glu) + L-glutamate + ATP = L-glutamyl-tRNA(Glu) + AMP + diphosphate. Its function is as follows. Catalyzes the attachment of glutamate to tRNA(Glu) in a two-step reaction: glutamate is first activated by ATP to form Glu-AMP and then transferred to the acceptor end of tRNA(Glu). In Methanospirillum hungatei JF-1 (strain ATCC 27890 / DSM 864 / NBRC 100397 / JF-1), this protein is Glutamate--tRNA ligase.